A 301-amino-acid chain; its full sequence is Securin (301 aa).

3 disordered regions span residues 1-55, 82-120, and 218-284; these read MLPR…RTVL, DSPT…DTPL, and ASDQ…RSIH. Positions 33–36 match the D-box 1 motif; sequence RAPL. The span at 38 to 50 shows a compositional bias: polar residues; sequence STKQSNAPSSVTV. Positions 52–55 match the D-box 2 motif; it reads RTVL. Composition is skewed to polar residues over residues 88–98, 110–119, and 231–245; these read EPNSQGISRSA, PRRSSLTDTP, and VSKQ…STVY. 2 consecutive repeats follow at residues 250–260 and 270–280; these read ASGKSIPRPLS and ASGNSRRRPLS.

This sequence belongs to the securin family. As to quaternary structure, interacts with the caspase-like cut1, and prevents its protease activity probably by covering its active site. Ubiquitinated by the anaphase promoting complex (APC) at the onset of anaphase, conducting to its degradation.

It localises to the cytoplasm. It is found in the nucleus. In terms of biological role, regulatory protein, which plays a central role in chromosome stability. Probably acts by blocking the action of key proteins. During the mitosis, it blocks separase/cut1 function, preventing the proteolysis of the cohesin complex and the subsequent segregation of the chromosomes. At the onset of anaphase, it is ubiquitinated, conducting to its destruction and to the liberation of cut1. The protein is Securin (cut2) of Schizosaccharomyces pombe (strain 972 / ATCC 24843) (Fission yeast).